A 235-amino-acid polypeptide reads, in one-letter code: Small ribosomal subunit protein uS2 (235 aa).

This sequence belongs to the universal ribosomal protein uS2 family.

This Caldanaerobacter subterraneus subsp. tengcongensis (strain DSM 15242 / JCM 11007 / NBRC 100824 / MB4) (Thermoanaerobacter tengcongensis) protein is Small ribosomal subunit protein uS2.